A 109-amino-acid chain; its full sequence is Ig kappa chain V region S211 (109 aa).

Residues 1-23 (DVQMTQSPSYLAASPGESVSISC) are framework-1. The segment at 24–35 (KASNKSISNNLA) is complementarity-determining-1. The segment at 36-50 (WYZZKPGKANKLLIS) is framework-2. The segment at 51–57 (SGSTLQS) is complementarity-determining-2. The interval 58–89 (GTPSRFSGSGSDTDFTLTIRSLEFQDFAVYYC) is framework-3. Positions 90 to 98 (ZZYNEPYYT) are complementarity-determining-3. The framework-4 stretch occupies residues 99 to 108 (FGAGTMLELK).

The chain is Ig kappa chain V region S211 from Rattus norvegicus (Rat).